A 388-amino-acid chain; its full sequence is Ribonuclease D (388 aa).

The 167-residue stretch at Ile-7–Leu-173 folds into the 3'-5' exonuclease domain. The 82-residue stretch at Lys-212–Glu-293 folds into the HRDC domain.

It belongs to the RNase D family. A divalent metal cation is required as a cofactor.

The protein localises to the cytoplasm. The catalysed reaction is Exonucleolytic cleavage that removes extra residues from the 3'-terminus of tRNA to produce 5'-mononucleotides.. Functionally, exonuclease involved in the 3' processing of various precursor tRNAs. Initiates hydrolysis at the 3'-terminus of an RNA molecule and releases 5'-mononucleotides. The protein is Ribonuclease D of Sphingobium indicum (strain DSM 16413 / CCM 7287 / MTCC 6362 / UT26 / NBRC 101211 / UT26S) (Sphingobium japonicum).